A 435-amino-acid polypeptide reads, in one-letter code: Flavonol 7-O-rhamnosyltransferase (435 aa).

Glutamine 18 serves as a coordination point for UDP. A UDP-beta-L-rhamnose-binding site is contributed by glutamine 18. Residue histidine 21 is the Proton acceptor of the active site. Histidine 21 contributes to the quercetin binding site. Aspartate 119 acts as the Charge relay in catalysis. UDP is bound by residues serine 250, alanine 315, histidine 332, glycine 336, serine 337, and glutamate 340. 6 residues coordinate UDP-beta-L-rhamnose: serine 250, alanine 315, histidine 332, glycine 336, serine 337, and glutamate 340.

This sequence belongs to the UDP-glycosyltransferase family. In terms of tissue distribution, highly expressed in floral buds. Expressed in stems, leaves and flowers. Expressed at low levels in roots and siliques. Expressed on the adaxial side of cotyledons and emerging leaves, in trichomes, root columella cells, and the late elongation/early differentiation zone of roots.

The enzyme catalyses quercitrin + UDP-beta-L-rhamnose = quercetin 3,7-bis-O-alpha-L-rhamnoside + UDP + H(+). It carries out the reaction quercetin 3-O-beta-D-glucoside + UDP-beta-L-rhamnose = quercetin 3-O-beta-D-glucoside-7-O-alpha-L-rhamnoside + UDP + H(+). It functions in the pathway flavonoid metabolism. In terms of biological role, flavonol 7-O-rhamnosyltransferase that catalyzes the transfer of rhamnose from UDP-rhamnose to the 7-OH position of 3-O-glycosylated flavonols, such as kaempferol 3-O-rhamnoside, kaempferol 3-O-glucoside, quercetin 3-O-glucoside, quercetin 3-O-galactoside, quercetin 3-O-rhamnoside and isorhamnetin 3-O-glucoside. Is able to glycosylate the flavonols quercetin and kaempferol to yield quercetin 7-O-rhamnoside and kaempferol 7-O-rhamnoside. Shows a strict specificity for UDP-rhamnose as sugar donor. Does not act on 3-O-glycosylated anthocyanins. The accumulation of kaempferol 3-O-rhamnoside-7-O-rhamnoside inhibits basipetal auxin transport, which influences auxin distribution and plant organ development. The protein is Flavonol 7-O-rhamnosyltransferase of Arabidopsis thaliana (Mouse-ear cress).